The primary structure comprises 403 residues: Phosphoglycerate kinase (403 aa).

Residues 22–24, arginine 37, 60–63, arginine 119, and arginine 152 each bind substrate; these read DFN and HFGR. Residues lysine 202, glutamate 324, and 354–357 each bind ATP; that span reads GGDT.

This sequence belongs to the phosphoglycerate kinase family. Monomer.

It localises to the cytoplasm. The catalysed reaction is (2R)-3-phosphoglycerate + ATP = (2R)-3-phospho-glyceroyl phosphate + ADP. The protein operates within carbohydrate degradation; glycolysis; pyruvate from D-glyceraldehyde 3-phosphate: step 2/5. The chain is Phosphoglycerate kinase from Maricaulis maris (strain MCS10) (Caulobacter maris).